The chain runs to 176 residues: MAFDELLNDPVIQKYLHELVGPTGMPVAAAPPDGEVTDEELAEELGLELNDVRRALFILYENDLATYRRVRDEDSGWLTYLWTFHYENIPENLQSEMYRLLDALEERLEYERSHEFYLSEPAGIRFEFSEAMELGFQCPETGAPLEPIENQEMINAMERRIDSLQSELNVGVTQTV.

Positions 8-90 constitute an HTH TFE/IIEalpha-type domain; it reads NDPVIQKYLH…LWTFHYENIP (83 aa).

The protein belongs to the TFE family. As to quaternary structure, monomer. Interaction with RNA polymerase subunits RpoF and RpoE is necessary for Tfe stimulatory transcription activity. Able to interact with Tbp and RNA polymerase in the absence of DNA promoter. Interacts both with the preinitiation and elongation complexes.

In terms of biological role, transcription factor that plays a role in the activation of archaeal genes transcribed by RNA polymerase. Facilitates transcription initiation by enhancing TATA-box recognition by TATA-box-binding protein (Tbp), and transcription factor B (Tfb) and RNA polymerase recruitment. Not absolutely required for transcription in vitro, but particularly important in cases where Tbp or Tfb function is not optimal. It dynamically alters the nucleic acid-binding properties of RNA polymerases by stabilizing the initiation complex and destabilizing elongation complexes. Seems to translocate with the RNA polymerase following initiation and acts by binding to the non template strand of the transcription bubble in elongation complexes. This is Transcription factor E from Haloquadratum walsbyi (strain DSM 16790 / HBSQ001).